A 318-amino-acid polypeptide reads, in one-letter code: D-alanine--D-alanine ligase (318 aa).

The 200-residue stretch at lysine 116 to alanine 315 folds into the ATP-grasp domain. Methionine 146–threonine 201 contacts ATP. The Mg(2+) site is built by aspartate 269, glutamate 282, and asparagine 284.

The protein belongs to the D-alanine--D-alanine ligase family. Mg(2+) is required as a cofactor. Requires Mn(2+) as cofactor.

Its subcellular location is the cytoplasm. It catalyses the reaction 2 D-alanine + ATP = D-alanyl-D-alanine + ADP + phosphate + H(+). Its pathway is cell wall biogenesis; peptidoglycan biosynthesis. Functionally, cell wall formation. This Pseudoalteromonas atlantica (strain T6c / ATCC BAA-1087) protein is D-alanine--D-alanine ligase.